Consider the following 149-residue polypeptide: MKYSRHAKILEIIDTMEIETQEELSEELRKIGFNVTQATVSRDIKELRLIKVLSKSGNYKYATLRSQENVLSDRLVRLFKDSILSIEYAGNIMVMKTLAGAAQAAASAIDAVDLKGVMGTIAGDDTIFVVVRDQDQMQEIEEKFRRLTK.

It belongs to the ArgR family.

The protein resides in the cytoplasm. Its pathway is amino-acid biosynthesis; L-arginine biosynthesis [regulation]. Regulates arginine biosynthesis genes. The chain is Arginine repressor from Alkaliphilus metalliredigens (strain QYMF).